A 224-amino-acid chain; its full sequence is Beta-casein (224 aa).

Positions 1–15 (MKVLILACLVALALA) are cleaved as a signal peptide. Residues Ser30, Ser32, Ser33, and Ser34 each carry the phosphoserine modification. Residue Ser50 is modified to Phosphoserine; in variant A1, variant A2, variant A3, variant B, variant E, variant F, variant G and variant H.

It belongs to the beta-casein family. As to expression, mammary gland specific. Secreted in milk.

It is found in the secreted. Its function is as follows. Important role in determination of the surface properties of the casein micelles. Casoparan acts as a macrophage activator, increasing the phagocytic activity of macrophages and peroxide release from macrophages. It also acts as a bradykinin-potentiating peptide. Functionally, casohypotensin acts as a bradykinin-potentiating peptide. Induces hypotension in rats. Acts as a strong competitive inhibitor of endo-oligopeptidase A. In terms of biological role, antioxidant peptide has antioxidant activity. The protein is Beta-casein (CSN2) of Bos taurus (Bovine).